A 721-amino-acid polypeptide reads, in one-letter code: MKYDIKIDLKNKNEEYSFGEVAKQANGAAWLKSGNTVILATVVIDETEIVKDDFLPLTVQYIEKAYAAGKIPGGFFKRETKASDFETLTSRIVDRSLRPLFPKGFGHPTQITIMVFSVDKESDLQVLALNAASAALYVSDIDINKSVSAIRVAKIDGELILNPTLSELDKSTLDLYLSGTKEDLLMIEMRSKGGIKVDTNLMIDPLMDPTLSSAIIATHVSNAVPEDELITILAKAEELLFETNAMYEEMFKEFKKETSPLECKAHALNEEMLKYVRSNHYSDIKSAMNQMAKSERSTALRQLRKKIIITKEEWDEVELKDVIESVKKEQVRGQILNDRVRADGRALNEIRPISISTNVLPSAHASCLFTRGQTQALVVLTMGGPKDAQMFENLTDEGTQNENFMVHYNFPGFSVGEASPIMGTKRRELGHGNLAKRALEPIVNLEGQTVRLVSEILESNGSSSMATVCGGYMALRAADIETSDTIAGIAMGMVSEGDKYAILSDIMGLEDHDGDLDFKVTGSKDGITAMQMDIKLGGISLNILKEALYQAKEGRAHIINIMQEAEKNISFNDGVLPSTDFFHINPSFIGDIIGQAGKTIREIIEKFEVAIDIDKKDGKVKVTGKSKSGVQAAREHIEGIVSTPKMPKIEYKVGDIHKGIVKKIVEFGAFIELPDGVDGLLHISKISDQRVEKVSDILKEGEEINVEILEFKGNKISLGIA.

Positions 511 and 517 each coordinate Mg(2+). Positions 577-637 constitute a KH domain; it reads PSTDFFHINP…SGVQAAREHI (61 aa). Positions 654-721 constitute an S1 motif domain; sequence GDIHKGIVKK…KGNKISLGIA (68 aa).

This sequence belongs to the polyribonucleotide nucleotidyltransferase family. Requires Mg(2+) as cofactor.

The protein localises to the cytoplasm. It catalyses the reaction RNA(n+1) + phosphate = RNA(n) + a ribonucleoside 5'-diphosphate. In terms of biological role, involved in mRNA degradation. Catalyzes the phosphorolysis of single-stranded polyribonucleotides processively in the 3'- to 5'-direction. The protein is Polyribonucleotide nucleotidyltransferase of Sulfurimonas denitrificans (strain ATCC 33889 / DSM 1251) (Thiomicrospira denitrificans (strain ATCC 33889 / DSM 1251)).